The sequence spans 238 residues: 15,16-dihydrobiliverdin:ferredoxin oxidoreductase (238 aa).

It belongs to the HY2 family.

The catalysed reaction is 15,16-dihydrobiliverdin + oxidized 2[4Fe-4S]-[ferredoxin] = biliverdin IXalpha + reduced 2[4Fe-4S]-[ferredoxin] + 2 H(+). In terms of biological role, catalyzes the two-electron reduction of biliverdin IX-alpha at the C15 methine bridge. In Prochlorococcus marinus (strain MIT 9211), this protein is 15,16-dihydrobiliverdin:ferredoxin oxidoreductase.